A 104-amino-acid chain; its full sequence is MEKIRLKLKAYDHRVLDRSVVAIVEAVKRSGSEIRGPIPLPTKNKRYTVLRSPHVNKDSREQFEIRVYSRLIDIISATPETVDSLMKLDLAPEVDVEVTSMETK.

It belongs to the universal ribosomal protein uS10 family. In terms of assembly, part of the 30S ribosomal subunit.

Functionally, involved in the binding of tRNA to the ribosomes. This chain is Small ribosomal subunit protein uS10, found in Helicobacter pylori (strain J99 / ATCC 700824) (Campylobacter pylori J99).